A 200-amino-acid chain; its full sequence is LHFPL tetraspan subfamily member 6 protein (200 aa).

The N-terminal stretch at 1–21 is a signal peptide; that stretch reads MASSLTCTGVIWALLSFLCAA. A run of 3 helical transmembrane segments spans residues 84 to 104, 123 to 143, and 166 to 186; these read ICTI…LTAL, GIQF…PLGW, and IGWA…LCTW.

Belongs to the LHFP family. As to expression, pancreas, kidney, skeletal muscle, liver, lung brain, heart, colon, small intestine, uterus, testis, prostate, thymus, spleen and placenta.

The protein resides in the membrane. In Homo sapiens (Human), this protein is LHFPL tetraspan subfamily member 6 protein.